Consider the following 552-residue polypeptide: Glutamine--tRNA ligase (552 aa).

The 'HIGH' region motif lies at 34-44 (PEPNGYLHIGH). ATP-binding positions include 35 to 37 (EPN) and 41 to 47 (HIGHAKS). 2 residues coordinate L-glutamine: D67 and Y212. ATP is bound by residues T231, 261–262 (RL), and 269–271 (MSK). A 'KMSKS' region motif is present at residues 268 to 272 (LMSKR).

Belongs to the class-I aminoacyl-tRNA synthetase family. In terms of assembly, monomer.

It is found in the cytoplasm. The enzyme catalyses tRNA(Gln) + L-glutamine + ATP = L-glutaminyl-tRNA(Gln) + AMP + diphosphate. This chain is Glutamine--tRNA ligase, found in Hamiltonella defensa subsp. Acyrthosiphon pisum (strain 5AT).